Reading from the N-terminus, the 448-residue chain is N-succinylarginine dihydrolase (448 aa).

Substrate is bound by residues 19–28, N110, and 137–138; these read GGLSYGNVAS and HR. Residue E174 is part of the active site. A substrate-binding site is contributed by R214. H250 is a catalytic residue. Residues D252 and N365 each contribute to the substrate site. Catalysis depends on C371, which acts as the Nucleophile.

Belongs to the succinylarginine dihydrolase family. In terms of assembly, homodimer.

It carries out the reaction N(2)-succinyl-L-arginine + 2 H2O + 2 H(+) = N(2)-succinyl-L-ornithine + 2 NH4(+) + CO2. Its pathway is amino-acid degradation; L-arginine degradation via AST pathway; L-glutamate and succinate from L-arginine: step 2/5. Catalyzes the hydrolysis of N(2)-succinylarginine into N(2)-succinylornithine, ammonia and CO(2). This chain is N-succinylarginine dihydrolase, found in Pseudomonas syringae pv. tomato (strain ATCC BAA-871 / DC3000).